A 100-amino-acid polypeptide reads, in one-letter code: uncharacterized protein (100 aa).

A helical membrane pass occupies residues 28-45 (VFLVFYIITMVKIYIFLI).

The protein localises to the membrane. This is an uncharacterized protein from Saccharomyces cerevisiae (strain ATCC 204508 / S288c) (Baker's yeast).